The chain runs to 615 residues: Nuclear receptor subfamily 1 group D member 1 (615 aa).

Over residues Met1–Gly12 the composition is skewed to polar residues. Positions Met1–Ser70 are required for phosphorylation by CSNK1E and cytoplasmic localization. Residues Met1 to Thr120 are disordered. Positions Met1 to Met129 are modulating. The span at Ile14–Ser34 shows a compositional bias: low complexity. Over residues Asp35 to Cys48 the composition is skewed to polar residues. The segment at Pro49–Thr285 is crucial for activation of GJA1. Ser55 and Ser59 each carry phosphoserine; by GSK3-beta. The segment covering Ser70–Ser94 has biased composition (low complexity). Residues Val130–Phe206 constitute a DNA-binding region (nuclear receptor). 2 NR C4-type zinc fingers span residues Cys133–Cys153 and Cys170–Cys194. Residues Lys192 and Lys193 each carry the N6-acetyllysine; by KAT5 modification. 2 disordered regions span residues Leu235–Met286 and Pro312–Cys337. Residues Thr240–Gly252 are compositionally biased toward low complexity. Positions Pro253 to Thr262 are enriched in pro residues. A Phosphothreonine; by CDK1 modification is found at Thr275. One can recognise an NR LBD domain in the interval Thr285–Gln615. A compositionally biased stretch (polar residues) spans Pro312–Thr328. Position 419 (Cys419) interacts with heme. Lys592 is subject to N6-acetyllysine. Position 603 (His603) interacts with heme.

Belongs to the nuclear hormone receptor family. NR1 subfamily. As to quaternary structure, binds DNA as a monomer or a homodimer. Interacts with NR2E3 and ZNHIT1. Interacts with C1D. Interacts with SP1. Interacts with OPHN1 (via C-terminus). Interacts with PER2; the interaction associates PER2 to BMAL1 promoter region. Interacts with CRY1. Interacts with CCAR2. Interacts with SIAH2. Interacts with FBXW7 and CDK1. Interacts with HUWE1. Interacts with NR0B2. Interacts with NFIL3. Interacts (via domain NR LBD) with HSP90AA1 and HSP90AB1. Ubiquitinated, leading to its proteasomal degradation. Ubiquitinated by the SCF(FBXW7) complex when phosphorylated by CDK1 leading to its proteasomal degradation. Ubiquitinated by SIAH2; leading to its proteasomal degradation. Rapidly ubiquitinated in response to inflammatory triggers and sumoylation is a prerequisite to its ubiquitination. Post-translationally, sumoylated by UBE2I, desumoylated by SENP1, and sumoylation is a prerequisite to its ubiquitination. In terms of processing, phosphorylated by CSNK1E; phosphorylation enhances its cytoplasmic localization. Undergoes lysosome-mediated degradation in a time-dependent manner in the liver. In terms of tissue distribution, expressed during adipocyte differentiation (at protein level). Expressed in skeletal muscle, bladder, lumbar spinal cord, pancreatic islets and hypothalamus. Expressed in developing and adult retina. In the adult retina, predominantly expressed in the outer nuclear layer, where rod and cone cells reside, and also localized to the ganglion cell layer. Expressed in a circadian manner in the liver. Expressed in a circadian manner in the lung with a peak between ZT8 and ZT12.

It localises to the nucleus. Its subcellular location is the cytoplasm. The protein localises to the cell projection. It is found in the dendrite. The protein resides in the dendritic spine. Its function is as follows. Transcriptional repressor which coordinates circadian rhythm and metabolic pathways in a heme-dependent manner. Integral component of the complex transcription machinery that governs circadian rhythmicity and forms a critical negative limb of the circadian clock by directly repressing the expression of core clock components BMAL1, CLOCK and CRY1. Also regulates genes involved in metabolic functions, including lipid and bile acid metabolism, adipogenesis, gluconeogenesis and the macrophage inflammatory response. Acts as a receptor for heme which stimulates its interaction with the NCOR1/HDAC3 corepressor complex, enhancing transcriptional repression. Recognizes two classes of DNA response elements within the promoter of its target genes and can bind to DNA as either monomers or homodimers, depending on the nature of the response element. Binds as a monomer to a response element composed of the consensus half-site motif 5'-[A/G]GGTCA-3' preceded by an A/T-rich 5' sequence (RevRE), or as a homodimer to a direct repeat of the core motif spaced by two nucleotides (RevDR-2). Acts as a potent competitive repressor of ROR alpha (RORA) function and regulates the levels of its ligand heme by repressing the expression of PPARGC1A, a potent inducer of heme synthesis. Regulates lipid metabolism by repressing the expression of APOC3 and by influencing the activity of sterol response element binding proteins (SREBPs); represses INSIG2 which interferes with the proteolytic activation of SREBPs which in turn govern the rhythmic expression of enzymes with key functions in sterol and fatty acid synthesis. Regulates gluconeogenesis via repression of G6PC1 and PEPCK and adipocyte differentiation via repression of PPARG. Regulates glucagon release in pancreatic alpha-cells via the AMPK-NAMPT-SIRT1 pathway and the proliferation, glucose-induced insulin secretion and expression of key lipogenic genes in pancreatic-beta cells. Positively regulates bile acid synthesis by increasing hepatic expression of CYP7A1 via repression of NR0B2 and NFIL3 which are negative regulators of CYP7A1. Modulates skeletal muscle oxidative capacity by regulating mitochondrial biogenesis and autophagy; controls mitochondrial biogenesis and respiration by interfering with the STK11-PRKAA1/2-SIRT1-PPARGC1A signaling pathway. Represses the expression of SERPINE1/PAI1, an important modulator of cardiovascular disease and the expression of inflammatory cytokines and chemokines in macrophages. Represses gene expression at a distance in macrophages by inhibiting the transcription of enhancer-derived RNAs (eRNAs). Plays a role in the circadian regulation of body temperature and negatively regulates thermogenic transcriptional programs in brown adipose tissue (BAT); imposes a circadian oscillation in BAT activity, increasing body temperature when awake and depressing thermogenesis during sleep. In concert with NR2E3, regulates transcriptional networks critical for photoreceptor development and function. In addition to its activity as a repressor, can also act as a transcriptional activator. In the ovarian granulosa cells acts as a transcriptional activator of STAR which plays a role in steroid biosynthesis. In collaboration with SP1, activates GJA1 transcription in a heme-independent manner. Represses the transcription of CYP2B10, CYP4A10 and CYP4A14. Represses the transcription of CES2. Represses and regulates the circadian expression of TSHB in a NCOR1-dependent manner. Negatively regulates the protein stability of NR3C1 and influences the time-dependent subcellular distribution of NR3C1, thereby affecting its transcriptional regulatory activity. Plays a critical role in the circadian control of neutrophilic inflammation in the lung; under resting, non-stress conditions, acts as a rhythmic repressor to limit inflammatory activity whereas in the presence of inflammatory triggers undergoes ubiquitin-mediated degradation thereby relieving inhibition of the inflammatory response. Plays a key role in the circadian regulation of microglial activation and neuroinflammation; suppresses microglial activation through the NF-kappaB pathway in the central nervous system. Plays a role in the regulation of the diurnal rhythms of lipid and protein metabolism in the skeletal muscle via transcriptional repression of genes controlling lipid and amino acid metabolism in the muscle. The polypeptide is Nuclear receptor subfamily 1 group D member 1 (Nr1d1) (Mus musculus (Mouse)).